The sequence spans 60 residues: Large ribosomal subunit protein bL32 (60 aa).

Belongs to the bacterial ribosomal protein bL32 family.

This chain is Large ribosomal subunit protein bL32, found in Desulfovibrio desulfuricans (strain ATCC 27774 / DSM 6949 / MB).